The primary structure comprises 306 residues: Ribonuclease Z (306 aa).

Positions 63, 65, 67, 68, 140, 211, and 269 each coordinate Zn(2+). D67 acts as the Proton acceptor in catalysis.

Belongs to the RNase Z family. Homodimer. The cofactor is Zn(2+).

The catalysed reaction is Endonucleolytic cleavage of RNA, removing extra 3' nucleotides from tRNA precursor, generating 3' termini of tRNAs. A 3'-hydroxy group is left at the tRNA terminus and a 5'-phosphoryl group is left at the trailer molecule.. Zinc phosphodiesterase, which displays some tRNA 3'-processing endonuclease activity. Probably involved in tRNA maturation, by removing a 3'-trailer from precursor tRNA. The polypeptide is Ribonuclease Z (Listeria monocytogenes serotype 4a (strain HCC23)).